Consider the following 447-residue polypeptide: Innexin-5 (447 aa).

Transmembrane regions (helical) follow at residues 30–47 (TSTL…SQYV), 108–128 (QWIP…SIIW), 198–218 (ALYL…FWIL), and 283–303 (VYVF…CSLA). The segment at 389–447 (KKDDDSALPASAPVDLQEDDDDDTPFPPPTKAVAETLTSDDEEEETDVDSPDTTATLPR) is disordered. Residues 426-438 (TSDDEEEETDVDS) show a composition bias toward acidic residues.

Belongs to the pannexin family.

It is found in the cell membrane. Its subcellular location is the cell junction. The protein resides in the gap junction. Structural component of the gap junctions. In Caenorhabditis elegans, this protein is Innexin-5 (inx-5).